Here is a 201-residue protein sequence, read N- to C-terminus: MAKRVTGPEIEKLIQLLAKVPGLGPRSARRAALHLVKKKEQLLGPLAEAMGEAHRKVKICSCCGNVDTIDPCTVCTDERRDRSVIIVVEDVADLWALERAAALNAAYHVLGGTLSPLDGIGPDDLNIKGLVDRVAKGGVRELVIAVNATVEGQTTAHYITDQLEGMEVKITRLAHGVPVGGELDYLDEGTLTAALRARTTI.

A C4-type zinc finger spans residues C60 to C75. The Toprim domain occupies S83–P178.

It belongs to the RecR family.

May play a role in DNA repair. It seems to be involved in an RecBC-independent recombinational process of DNA repair. It may act with RecF and RecO. This chain is Recombination protein RecR, found in Sinorhizobium fredii (strain NBRC 101917 / NGR234).